The following is a 412-amino-acid chain: Putative potassium channel protein RPA4233 (412 aa).

The next 5 membrane-spanning stretches (helical) occupy residues 35-55 (FIVFFIVLSVGITVMESVPAM), 65-85 (ALELLCLVMFSIEYYIRIWIA), 164-184 (LMACLVILACATLVSATAMHI), 202-222 (WWAIVTLSTIGYGDVVPATGI), and 225-245 (MVASATIICGLIMIALPVGIV). The short motif at 210-215 (TIGYGD) is the Selectivity filter element. 270–388 (LFSHLTAGDI…RKINQIVEGR (119 aa)) contacts a nucleoside 3',5'-cyclic phosphate.

It belongs to the potassium channel family.

The protein resides in the cell membrane. The polypeptide is Putative potassium channel protein RPA4233 (Rhodopseudomonas palustris (strain ATCC BAA-98 / CGA009)).